Here is a 463-residue protein sequence, read N- to C-terminus: Lariat debranching enzyme (463 aa).

4 residues coordinate a divalent metal cation: cysteine 8, histidine 10, aspartate 33, and asparagine 78. Positions 118-148 are lariat recognition loop; the sequence is SGIYSAMDYKKGRYEGLPYNYKMLKSIYHTR. Residues histidine 168, histidine 220, and histidine 222 each coordinate a divalent metal cation. Residues 250-324 are disordered; sequence SGFSMKGLNE…QVTKFLALDK (75 aa). A compositionally biased stretch (polar residues) spans 256 to 267; sequence GLNEPSQERLPV. Composition is skewed to basic and acidic residues over residues 276 to 289 and 299 to 323; these read DEEGSNNEQEEKQD and CRKESCKKEPSLSSSDQVTKFLALD.

The protein belongs to the lariat debranching enzyme family. Fe(2+) is required as a cofactor. Zn(2+) serves as cofactor. Requires Mn(2+) as cofactor.

Its subcellular location is the nucleus. It is found in the cytoplasm. Its activity is regulated as follows. Active in presence of diverse metals including Fe(2+), Zn(2+) and Mn(2+). Binds two metal cations in two adjacent alpha and beta metal-binding pockets. In terms of biological role, cleaves the 2'-5' phosphodiester linkage at the branch point of lariat intron pre-mRNAs after splicing and converts them into linear molecules that are subsequently degraded, thereby facilitating ribonucleotide turnover. This is Lariat debranching enzyme (dbr1) from Schizosaccharomyces pombe (strain 972 / ATCC 24843) (Fission yeast).